We begin with the raw amino-acid sequence, 405 residues long: Cytoplasmic tRNA 2-thiolation protein 2 (405 aa).

The protein belongs to the CTU2/NCS2 family.

It localises to the cytoplasm. Its pathway is tRNA modification; 5-methoxycarbonylmethyl-2-thiouridine-tRNA biosynthesis. In terms of biological role, plays a central role in 2-thiolation of mcm(5)S(2)U at tRNA wobble positions of tRNA(Lys), tRNA(Glu) and tRNA(Gln). May act by forming a heterodimer with NCS6/CTU1 that ligates sulfur from thiocarboxylated URM1 onto the uridine of tRNAs at wobble position. This Drosophila melanogaster (Fruit fly) protein is Cytoplasmic tRNA 2-thiolation protein 2.